Here is a 677-residue protein sequence, read N- to C-terminus: Multicopper oxidase GIP1 (677 aa).

Residues 1–23 (MLTSPRLILLLLAWVFSALVASA) form the signal peptide. Plastocyanin-like domains follow at residues 31–150 (ITWE…IRRK) and 179–379 (LVMV…RYKG). The N-linked (GlcNAc...) asparagine glycan is linked to Asn-76. The Cu cation site is built by His-80, His-82, His-130, and His-132. N-linked (GlcNAc...) asparagine glycosylation is found at Asn-228, Asn-283, Asn-396, and Asn-478. A Plastocyanin-like 3 domain is found at 469–588 (DEGLVIRTKN…AGGMAIAILD (120 aa)). Position 503 (His-503) interacts with Cu cation. N-linked (GlcNAc...) asparagine glycosylation occurs at Asn-520. The segment at 629–651 (PLLAVSPSGGPKKDSGETSASDS) is disordered.

The protein belongs to the multicopper oxidase family. In terms of assembly, might be part of an extracellular enzyme complex composed of GIP1, aurF, aurO and aurS.

Its subcellular location is the secreted. The protein localises to the extracellular space. Its pathway is pigment biosynthesis. In terms of biological role, multicopper oxidase; part of the gene cluster that mediates the biosynthesis of aurofusarin, a red mycelium pigment which is acting as a mycotoxin. The first step is performed by the polyketide synthase which condenses one acetyl-CoA and 6 malonyl-CoA units to form the first intermediate, the cyclic heptaketide and yellow pigment YWA1. The C2 hydroxyl group in the pyrone ring of YWA1 is probably formed during ring closure by an aldol-type cyclization reaction. The dehydratase aurZ then acts as the first tailoring enzyme in the aurofusarin biosynthetic pathway by converting YWA1 to nor-rubrofusarin. Nor-rubrofusarin is then methylated to rubrofusarin by the O-methyltransferase aurJ. Rubrofusarin is then transported across the plasma membrane by the rubrofusarin-specific pump aurT for further enzymatic processing by the extracellular complex composed of GIP1, aurF, aurO and aurS to yield aurofusarin. The polypeptide is Multicopper oxidase GIP1 (Gibberella zeae (strain ATCC MYA-4620 / CBS 123657 / FGSC 9075 / NRRL 31084 / PH-1) (Wheat head blight fungus)).